A 260-amino-acid chain; its full sequence is Dehydrin ERD10 (260 aa).

Disordered regions lie at residues 1–187, 197–216, and 240–260; these read MAEE…EEEK, KLPG…TTPL, and KLPG…KVSD. Ala-2 carries the post-translational modification N-acetylalanine. A compositionally biased stretch (basic and acidic residues) spans 26 to 44; the sequence is EIKERGMFDFLKKKEEVKP. A Phosphoserine modification is found at Ser-61. Composition is skewed to basic and acidic residues over residues 67-102, 130-140, 148-162, 176-187, and 197-207; these read VAKH…DKLH, IVEGDHVKTVE, DRIK…KPGG, SVEDHKPEEEEK, and KLPGHSKKPED. 2 consecutive repeat copies span residues 184 to 204 and 227 to 247. Residues 184–247 are 2 X 21 AA repeats, Lys-rich; sequence EEEKKGFMDK…KEKLPGYHAK (64 aa).

This sequence belongs to the plant dehydrin family. In terms of tissue distribution, in stems, cauline leaves, roots and flowers. Low levels found in maturing seeds. Absent in dry seeds.

In Arabidopsis thaliana (Mouse-ear cress), this protein is Dehydrin ERD10 (ERD10).